We begin with the raw amino-acid sequence, 150 residues long: Large-conductance mechanosensitive channel (150 aa).

The next 2 membrane-spanning stretches (helical) occupy residues 19–39 and 85–105; these read VGIIIGGAFGAIVNTLVSDVL and GIFLNALISFMIMAFAVFMLI.

This sequence belongs to the MscL family. Homopentamer.

It is found in the cell inner membrane. Its function is as follows. Channel that opens in response to stretch forces in the membrane lipid bilayer. May participate in the regulation of osmotic pressure changes within the cell. The protein is Large-conductance mechanosensitive channel of Chlorobium limicola (strain DSM 245 / NBRC 103803 / 6330).